Reading from the N-terminus, the 291-residue chain is 4-diphosphocytidyl-2-C-methyl-D-erythritol kinase (291 aa).

Lysine 12 is an active-site residue. 95–105 (PDGGGLGGGSS) lines the ATP pocket. The active site involves aspartate 137.

Belongs to the GHMP kinase family. IspE subfamily.

The enzyme catalyses 4-CDP-2-C-methyl-D-erythritol + ATP = 4-CDP-2-C-methyl-D-erythritol 2-phosphate + ADP + H(+). It functions in the pathway isoprenoid biosynthesis; isopentenyl diphosphate biosynthesis via DXP pathway; isopentenyl diphosphate from 1-deoxy-D-xylulose 5-phosphate: step 3/6. Functionally, catalyzes the phosphorylation of the position 2 hydroxy group of 4-diphosphocytidyl-2C-methyl-D-erythritol. The protein is 4-diphosphocytidyl-2-C-methyl-D-erythritol kinase of Alkalilimnicola ehrlichii (strain ATCC BAA-1101 / DSM 17681 / MLHE-1).